The following is a 301-amino-acid chain: Ribosomal protein L11 methyltransferase (301 aa).

S-adenosyl-L-methionine contacts are provided by threonine 146, glycine 167, aspartate 189, and asparagine 237.

Belongs to the methyltransferase superfamily. PrmA family.

It is found in the cytoplasm. The catalysed reaction is L-lysyl-[protein] + 3 S-adenosyl-L-methionine = N(6),N(6),N(6)-trimethyl-L-lysyl-[protein] + 3 S-adenosyl-L-homocysteine + 3 H(+). In terms of biological role, methylates ribosomal protein L11. The chain is Ribosomal protein L11 methyltransferase from Prochlorococcus marinus (strain MIT 9313).